A 190-amino-acid chain; its full sequence is MEALHKKIREEGIVLSDQVLKVDAFLNHQIDPALMKLIGDEFAALFKDSGITKIVTIEASGIAPAIMTGLNLGVPVIFARKQQSLTLTENLLSATVYSFTKKTESTVAISPRHLTSSDRVLVIDDFLANGKASQALISIIKQAGATVAGLGIVIEKSFQGGRAELDAQGYRVESLARVKSLAGGVVTFIE.

Residues leucine 20 and asparagine 27 each coordinate xanthine. 128-132 (ANGKA) is a binding site for 5-phospho-alpha-D-ribose 1-diphosphate. Lysine 156 provides a ligand contact to xanthine.

Belongs to the purine/pyrimidine phosphoribosyltransferase family. Xpt subfamily. As to quaternary structure, homodimer.

Its subcellular location is the cytoplasm. The enzyme catalyses XMP + diphosphate = xanthine + 5-phospho-alpha-D-ribose 1-diphosphate. Its pathway is purine metabolism; XMP biosynthesis via salvage pathway; XMP from xanthine: step 1/1. Its function is as follows. Converts the preformed base xanthine, a product of nucleic acid breakdown, to xanthosine 5'-monophosphate (XMP), so it can be reused for RNA or DNA synthesis. The protein is Xanthine phosphoribosyltransferase of Pseudomonas fluorescens (strain SBW25).